Reading from the N-terminus, the 255-residue chain is 5-oxoprolinase subunit A (255 aa).

It belongs to the LamB/PxpA family. As to quaternary structure, forms a complex composed of PxpA, PxpB and PxpC.

The catalysed reaction is 5-oxo-L-proline + ATP + 2 H2O = L-glutamate + ADP + phosphate + H(+). In terms of biological role, catalyzes the cleavage of 5-oxoproline to form L-glutamate coupled to the hydrolysis of ATP to ADP and inorganic phosphate. This is 5-oxoprolinase subunit A from Clostridium beijerinckii (strain ATCC 51743 / NCIMB 8052) (Clostridium acetobutylicum).